The chain runs to 154 residues: Crossover junction endodeoxyribonuclease RuvC (154 aa).

Catalysis depends on residues Asp7, Glu67, and Asp139. The Mg(2+) site is built by Asp7, Glu67, and Asp139.

Belongs to the RuvC family. In terms of assembly, homodimer which binds Holliday junction (HJ) DNA. The HJ becomes 2-fold symmetrical on binding to RuvC with unstacked arms; it has a different conformation from HJ DNA in complex with RuvA. In the full resolvosome a probable DNA-RuvA(4)-RuvB(12)-RuvC(2) complex forms which resolves the HJ. It depends on Mg(2+) as a cofactor.

Its subcellular location is the cytoplasm. The enzyme catalyses Endonucleolytic cleavage at a junction such as a reciprocal single-stranded crossover between two homologous DNA duplexes (Holliday junction).. The RuvA-RuvB-RuvC complex processes Holliday junction (HJ) DNA during genetic recombination and DNA repair. Endonuclease that resolves HJ intermediates. Cleaves cruciform DNA by making single-stranded nicks across the HJ at symmetrical positions within the homologous arms, yielding a 5'-phosphate and a 3'-hydroxyl group; requires a central core of homology in the junction. The consensus cleavage sequence is 5'-(A/T)TT(C/G)-3'. Cleavage occurs on the 3'-side of the TT dinucleotide at the point of strand exchange. HJ branch migration catalyzed by RuvA-RuvB allows RuvC to scan DNA until it finds its consensus sequence, where it cleaves and resolves the cruciform DNA. The protein is Crossover junction endodeoxyribonuclease RuvC of Synechococcus sp. (strain CC9902).